Reading from the N-terminus, the 514-residue chain is Serine--tRNA ligase, cytoplasmic (514 aa).

M1 carries the post-translational modification N-acetylmethionine. The segment at 9–61 (RVDKGGDPALIRETQEKRFKDPGLVDQLVKADSEWRRCRFRADNLNKLKNLCS) is interaction with tRNA. S241 is modified (phosphoserine). L-serine is bound by residues T271 and R302. Residues 302–304 (RQE) and 318–321 (VHQF) each bind ATP. The residue at position 323 (K323) is an N6-acetyllysine. E325 contributes to the L-serine binding site. 391–394 (ELVS) provides a ligand contact to ATP. N427 contributes to the L-serine binding site. Residues 472–514 (KPAPIDQEPSKKQKKQHEGSKKKAAARDVTLENRLQNMEVTDA) form a disordered region. The segment covering 479–502 (EPSKKQKKQHEGSKKKAAARDVTL) has biased composition (basic and acidic residues). A Nuclear localization signal motif is present at residues 482-494 (KKQKKQHEGSKKK). Polar residues predominate over residues 504-514 (NRLQNMEVTDA).

This sequence belongs to the class-II aminoacyl-tRNA synthetase family. Type-1 seryl-tRNA synthetase subfamily. Homodimer. The tRNA molecule may bind across the dimer. Interacts with SIRT2. Interacts with METTL6; interaction is required for the tRNA N(3)-methylcytidine methyltransferase activity of METTL6.

The protein resides in the cytoplasm. It localises to the nucleus. The catalysed reaction is tRNA(Ser) + L-serine + ATP = L-seryl-tRNA(Ser) + AMP + diphosphate + H(+). The enzyme catalyses tRNA(Sec) + L-serine + ATP = L-seryl-tRNA(Sec) + AMP + diphosphate + H(+). It participates in aminoacyl-tRNA biosynthesis; selenocysteinyl-tRNA(Sec) biosynthesis; L-seryl-tRNA(Sec) from L-serine and tRNA(Sec): step 1/1. Its function is as follows. Catalyzes the attachment of serine to tRNA(Ser) in a two-step reaction: serine is first activated by ATP to form Ser-AMP and then transferred to the acceptor end of tRNA(Ser). Is probably also able to aminoacylate tRNA(Sec) with serine, to form the misacylated tRNA L-seryl-tRNA(Sec), which will be further converted into selenocysteinyl-tRNA(Sec). In the nucleus, binds to the VEGFA core promoter and prevents MYC binding and transcriptional activation by MYC. Recruits SIRT2 to the VEGFA promoter, promoting deacetylation of histone H4 at 'Lys-16' (H4K16). Thereby, inhibits the production of VEGFA and sprouting angiogenesis mediated by VEGFA. This is Serine--tRNA ligase, cytoplasmic (SARS1) from Oryctolagus cuniculus (Rabbit).